Consider the following 638-residue polypeptide: Growth hormone receptor (638 aa).

Positions Met1–Ala18 are cleaved as a signal peptide. Residues Phe19–Tyr264 are Extracellular-facing. Asn46 carries N-linked (GlcNAc...) asparagine glycosylation. Intrachain disulfides connect Cys56/Cys66 and Cys101/Cys112. N-linked (GlcNAc...) asparagine glycosylation occurs at Asn115. The cysteines at positions 126 and 140 are disulfide-linked. A Fibronectin type-III domain is found at Pro151–Met254. N-linked (GlcNAc...) asparagine glycosylation is found at Asn156, Asn161, and Asn200. Residues Tyr240–Ser244 carry the WSXWS motif motif. The tract at residues Glu260–Asp262 is required for ADAM17-mediated proteolysis. Residues Phe265–Ser288 form a helical membrane-spanning segment. At Lys289–Pro638 the chain is on the cytoplasmic side. Residues Lys294–Val379 are required for JAK2 binding. A Box 1 motif motif is present at residues Ile297 to Lys305. Residues Asp340–Asp349 carry the UbE motif motif. Residue Ser341 is modified to Phosphoserine. Residues Pro353–Glu391 form a disordered region. A compositionally biased stretch (basic and acidic residues) spans Thr362–Ser384. Phosphotyrosine; by JAK2 is present on residues Tyr487 and Tyr595.

Belongs to the type I cytokine receptor family. Type 1 subfamily. On growth hormone (GH) binding, forms homodimers and binds JAK2 via a box 1-containing domain. The soluble form (GHBP) is produced by phorbol ester-promoted proteolytic cleavage at the cell surface (shedding) by ADAM17/TACE. Shedding is inhibited by growth hormone (GH) binding to the receptor probably due to a conformational change in GHR rendering the receptor inaccessible to ADAM17. In terms of processing, on GH binding, phosphorylated on tyrosine residues in the cytoplasmic domain by JAK2. Post-translationally, ubiquitinated by the ECS(SOCS2) complex following ligand-binding and phosphorylation by JAK2, leading to its degradation by the proteasome. Regulation by the ECS(SOCS2) complex acts as a negative feedback loop of growth hormone receptor signaling. Ubiquitination is not sufficient for GHR internalization. Expressed in various tissues with high expression in liver and skeletal muscle. In terms of tissue distribution, isoform 2 is expressed in lung, stomach and muscle. As to expression, predominantly expressed in kidney, bladder, adrenal gland and brain stem. Highly expressed in placental villi.

The protein localises to the cell membrane. It is found in the secreted. In terms of biological role, receptor for pituitary gland growth hormone (GH1) involved in regulating postnatal body growth. On ligand binding, couples to the JAK2/STAT5 pathway. Functionally, the soluble form (GHBP) acts as a reservoir of growth hormone in plasma and may be a modulator/inhibitor of GH signaling. Up-regulates the production of the soluble Growth hormone-binding protein form (GHBP) and acts as a negative inhibitor of growth hormone signaling. The polypeptide is Growth hormone receptor (GHR) (Homo sapiens (Human)).